A 620-amino-acid polypeptide reads, in one-letter code: 1-deoxy-D-xylulose-5-phosphate synthase (620 aa).

Residues His-75 and 116-118 each bind thiamine diphosphate; that span reads AHS. Residue Asp-147 coordinates Mg(2+). Thiamine diphosphate is bound by residues 148–149, Asn-177, Tyr-284, and Glu-366; that span reads GA. Mg(2+) is bound at residue Asn-177.

The protein belongs to the transketolase family. DXPS subfamily. As to quaternary structure, homodimer. Requires Mg(2+) as cofactor. Thiamine diphosphate serves as cofactor.

The enzyme catalyses D-glyceraldehyde 3-phosphate + pyruvate + H(+) = 1-deoxy-D-xylulose 5-phosphate + CO2. It functions in the pathway metabolic intermediate biosynthesis; 1-deoxy-D-xylulose 5-phosphate biosynthesis; 1-deoxy-D-xylulose 5-phosphate from D-glyceraldehyde 3-phosphate and pyruvate: step 1/1. Functionally, catalyzes the acyloin condensation reaction between C atoms 2 and 3 of pyruvate and glyceraldehyde 3-phosphate to yield 1-deoxy-D-xylulose-5-phosphate (DXP). This Bordetella avium (strain 197N) protein is 1-deoxy-D-xylulose-5-phosphate synthase.